The following is a 520-amino-acid chain: 2-isopropylmalate synthase (520 aa).

The 263-residue stretch at 12–274 folds into the Pyruvate carboxyltransferase domain; sequence VVIFDTTLRD…DTGIDTTMLT (263 aa). Residues Asp-21, His-209, His-211, and Asn-245 each coordinate Mn(2+). The regulatory domain stretch occupies residues 398-520; the sequence is KLLSLSVIAG…RLHAQHAAVV (123 aa).

It belongs to the alpha-IPM synthase/homocitrate synthase family. LeuA type 1 subfamily. Homodimer. It depends on Mn(2+) as a cofactor.

The protein localises to the cytoplasm. The catalysed reaction is 3-methyl-2-oxobutanoate + acetyl-CoA + H2O = (2S)-2-isopropylmalate + CoA + H(+). Its pathway is amino-acid biosynthesis; L-leucine biosynthesis; L-leucine from 3-methyl-2-oxobutanoate: step 1/4. Functionally, catalyzes the condensation of the acetyl group of acetyl-CoA with 3-methyl-2-oxobutanoate (2-ketoisovalerate) to form 3-carboxy-3-hydroxy-4-methylpentanoate (2-isopropylmalate). The polypeptide is 2-isopropylmalate synthase (Methylorubrum populi (strain ATCC BAA-705 / NCIMB 13946 / BJ001) (Methylobacterium populi)).